Consider the following 1926-residue polypeptide: Myosin-15 (1926 aa).

A Myosin N-terminal SH3-like domain is found at 29–79 (DGKKKCWIPDGENAYIEAEVKGSEDDGTVIVETADGESLSIKEDKIQQMNP). A Myosin motor domain is found at 83–770 (EMIEDMAMLT…FLGQLEAIRD (688 aa)). N6,N6,N6-trimethyllysine is present on Lys127. 176–183 (GESGAGKT) lines the ATP pocket. 2 actin-binding regions span residues 647-669 (LNKLMTNLKSTAPHFVRCINPNV) and 749-763 (RFGITKVFFKAGFLG). Residues 773 to 802 (LSKVFTLFQARAQGKLMRIKFQKILEERDA) form the IQ domain. Residues 833 to 1926 (KSSEVGEEVA…REFGKKVQEE (1094 aa)) adopt a coiled-coil conformation.

This sequence belongs to the TRAFAC class myosin-kinesin ATPase superfamily. Myosin family. In terms of assembly, muscle myosin is a hexameric protein that consists of 2 heavy chain subunits (MHC), 2 alkali light chain subunits (MLC) and 2 regulatory light chain subunits (MLC-2).

It is found in the cytoplasm. The protein localises to the myofibril. Functionally, muscle contraction. In Homo sapiens (Human), this protein is Myosin-15 (MYH15).